A 358-amino-acid polypeptide reads, in one-letter code: Chorismate synthase (358 aa).

NADP(+) is bound at residue R47. Residues 124–126 (RSS), 240–241 (NA), G284, 299–303 (KPVAT), and R325 contribute to the FMN site.

Belongs to the chorismate synthase family. In terms of assembly, homotetramer. Requires FMNH2 as cofactor.

The enzyme catalyses 5-O-(1-carboxyvinyl)-3-phosphoshikimate = chorismate + phosphate. Its pathway is metabolic intermediate biosynthesis; chorismate biosynthesis; chorismate from D-erythrose 4-phosphate and phosphoenolpyruvate: step 7/7. Functionally, catalyzes the anti-1,4-elimination of the C-3 phosphate and the C-6 proR hydrogen from 5-enolpyruvylshikimate-3-phosphate (EPSP) to yield chorismate, which is the branch point compound that serves as the starting substrate for the three terminal pathways of aromatic amino acid biosynthesis. This reaction introduces a second double bond into the aromatic ring system. The sequence is that of Chorismate synthase from Phocaeicola vulgatus (strain ATCC 8482 / DSM 1447 / JCM 5826 / CCUG 4940 / NBRC 14291 / NCTC 11154) (Bacteroides vulgatus).